The chain runs to 38 residues: Large ribosomal subunit protein bL36 (38 aa).

It belongs to the bacterial ribosomal protein bL36 family.

The polypeptide is Large ribosomal subunit protein bL36 (Buchnera aphidicola subsp. Cinara cedri (strain Cc)).